Consider the following 300-residue polypeptide: Dihydroorotate dehydrogenase B (NAD(+)), catalytic subunit (300 aa).

FMN is bound by residues serine 20 and 44 to 45 (KS). Residues lysine 44, 68-72 (NAMGL), and asparagine 122 contribute to the substrate site. Asparagine 122 is an FMN binding site. Catalysis depends on cysteine 125, which acts as the Nucleophile. FMN is bound by residues lysine 160 and isoleucine 186. 187–188 (NT) serves as a coordination point for substrate. FMN-binding positions include glycine 212, 238–239 (GG), and 260–261 (GT).

The protein belongs to the dihydroorotate dehydrogenase family. Type 1 subfamily. Heterotetramer of 2 PyrK and 2 PyrD type B subunits. Requires FMN as cofactor.

The protein localises to the cytoplasm. It carries out the reaction (S)-dihydroorotate + NAD(+) = orotate + NADH + H(+). Its pathway is pyrimidine metabolism; UMP biosynthesis via de novo pathway; orotate from (S)-dihydroorotate (NAD(+) route): step 1/1. In terms of biological role, catalyzes the conversion of dihydroorotate to orotate with NAD(+) as electron acceptor. The sequence is that of Dihydroorotate dehydrogenase B (NAD(+)), catalytic subunit (pyrD) from Pyrococcus furiosus (strain ATCC 43587 / DSM 3638 / JCM 8422 / Vc1).